The chain runs to 820 residues: DNA gyrase subunit A (820 aa).

One can recognise a Topo IIA-type catalytic domain in the interval isoleucine 31–leucine 496. The active-site O-(5'-phospho-DNA)-tyrosine intermediate is tyrosine 119. Residues glutamine 523–glycine 529 carry the GyrA-box motif.

Belongs to the type II topoisomerase GyrA/ParC subunit family. As to quaternary structure, heterotetramer, composed of two GyrA and two GyrB chains. In the heterotetramer, GyrA contains the active site tyrosine that forms a transient covalent intermediate with DNA, while GyrB binds cofactors and catalyzes ATP hydrolysis.

Its subcellular location is the cytoplasm. The enzyme catalyses ATP-dependent breakage, passage and rejoining of double-stranded DNA.. Its function is as follows. A type II topoisomerase that negatively supercoils closed circular double-stranded (ds) DNA in an ATP-dependent manner to modulate DNA topology and maintain chromosomes in an underwound state. Negative supercoiling favors strand separation, and DNA replication, transcription, recombination and repair, all of which involve strand separation. Also able to catalyze the interconversion of other topological isomers of dsDNA rings, including catenanes and knotted rings. Type II topoisomerases break and join 2 DNA strands simultaneously in an ATP-dependent manner. The sequence is that of DNA gyrase subunit A from Lawsonia intracellularis (strain PHE/MN1-00).